We begin with the raw amino-acid sequence, 191 residues long: Glutathione-independent glyoxalase DJ-1 (191 aa).

Residues glutamate 16, cysteine 111, and histidine 130 contribute to the active site.

This sequence belongs to the peptidase C56 family.

It is found in the cytoplasm. The protein localises to the nucleus. The enzyme catalyses methylglyoxal + H2O = (R)-lactate + H(+). Catalyzes the conversion of methylglyoxal (MG) to D-lactate in a single glutathione (GSH)-independent step. May play a role in detoxifying endogenously produced glyoxals. Involved in protection against reactive oxygen species (ROS). In Schizosaccharomyces pombe (strain 972 / ATCC 24843) (Fission yeast), this protein is Glutathione-independent glyoxalase DJ-1.